A 214-amino-acid chain; its full sequence is Phosphoheptose isomerase (214 aa).

An SIS domain is found at 51 to 209 (IASTFEDGGK…IDLVERLLGY (159 aa)). Position 66–68 (66–68 (NGG)) interacts with substrate. His-75 and Glu-79 together coordinate Zn(2+). Substrate-binding positions include Glu-79, 110–111 (ND), 136–138 (STS), Ser-141, and Gln-189. The Zn(2+) site is built by Gln-189 and His-197.

This sequence belongs to the SIS family. GmhA subfamily. It depends on Zn(2+) as a cofactor.

Its subcellular location is the cytoplasm. The enzyme catalyses 2 D-sedoheptulose 7-phosphate = D-glycero-alpha-D-manno-heptose 7-phosphate + D-glycero-beta-D-manno-heptose 7-phosphate. It participates in carbohydrate biosynthesis; D-glycero-D-manno-heptose 7-phosphate biosynthesis; D-glycero-alpha-D-manno-heptose 7-phosphate and D-glycero-beta-D-manno-heptose 7-phosphate from sedoheptulose 7-phosphate: step 1/1. Catalyzes the isomerization of sedoheptulose 7-phosphate in D-glycero-D-manno-heptose 7-phosphate. The polypeptide is Phosphoheptose isomerase (Chlorobium limicola (strain DSM 245 / NBRC 103803 / 6330)).